The following is a 2032-amino-acid chain: MGDDSEWLKLPVDQKCEHKLWKARLSGYEEALKIFQKIKDEKSPEWSKFLGLIKKFVTDSNAVVQLKGLEAALVYVENAHVAGKTTGEVVSGVVSKVFNQPKAKAKELGIEICLMYIEIEKGEAVQEELLKGLDNKNPKIIVACIETLRKALSEFGSKIILLKPIIKVLPKLFESREKAVRDEAKLIAVEIYRWIRDALRPPLQNINSVQLKELEEEWVKLPTSAPRPTRFLRSQQELEAKLEQQQSAGGDAEGGGDDGDEVPQIDAYELLEAVEILSKLPKDFYDKIEAKKWQERKEALESVEVLIKNPKLEAGDYADLVKALKKVVGKDTNVMLVALAAKCLTGLAVGLRKKFGQYAGHVVPTILEKFKEKKPQVVQALQEAIDAIFLTTTLQNISEDVLAVMDNKNPTIKQQTSLFIARSFRHCTASTLPKSLLKPFCAALLKHINDSAPEVRDAAFEALGTALKVVGEKAVNPFLADVDKLKLDKIKECSEKVELIHGKKAGLAADKKEFKPLPGRTAASGAAGDKDTKDISAPKPGPLKKAPAAKAGGPPKKGKPAAPGGAGNTGTKNKKGLETKEIVEPELSIEVCEEKASAVLPPTCIQLLDSSNWKERLACMEEFQKAVELMDRTEMPCQALVRMLAKKPGWKETNFQVMQMKLHIVALIAQKGNFSKTSAQVVLDGLVDKIGDVKCGNNAKEAMTAIAEACMLPWTAEQVVSMAFSQKNPKNQSETLNWLSNAIKEFGFSGLNVKAFISNVKTALAATNPAVRTAAITLLGVMYLYVGPSLRMFFEDEKPALLSQIDAEFEKMQGQSPPAPTRGISKHSTSGTDEGEDGDEPDDGSNDVVDLLPRTEISDKITSELVSKIGDKNWKIRKEGLDEVAGIINDAKFIQPNIGELPTALKGRLNDSNKILVQQTLNILQQLAVAMGPNIKQHVKNLGIPIITVLGDSKNNVRAAALATVNAWAEQTGMKEWLEGEDLSEELKKENPFLRQELLGWLAEKLPTLRSTPTDLILCVPHLYSCLEDRNGDVRKKAQDALPFFMMHLGYEKMAKATGKLKPTSKDQVLAMLEKAKVNMPAKPAPPTKATSKPMGGSAPAKFQPASAPAEDCISSSTEPKPDPKKAKAPGLSSKAKSAQGKKMPSKTSLKEDEDKSGPIFIVVPNGKEQRMKDEKGLKVLKWNFTTPRDEYIEQLKTQMSSCVAKWLQDEMFHSDFQHHNKALAVMVDHLESEKEGVIGCLDLILKWLTLRFFDTNTSVLMKALEYLKLLFTLLSEEEYHLTENEASSFIPYLVVKVGEPKDVIRKDVRAILNRMCLVYPASKMFPFIMEGTKSKNSKQRAECLEELGCLVESYGMNVCQPTPGKALKEIAVHIGDRDNAVRNAALNTIVTVYNVHGDQVFKLIGNLSEKDMSMLEERIKRSAKRPSAAPIKQVEEKPQRAQNISSNANMLRKGPAEDMSSKLNQARSMSGHPEAAQMVRREFQLDLDEIENDNGTVRCEMPELVQHKLDDIFEPVLIPEPKIRAVSPHFDDMHSNTASTINFIISQVASGDINTSIQALTQIDEVLRQEDKAEAMSGHIDQFLIATFMQLRLIYNTHMADEKLEKDEIIKLYSCIIGNMISLFQIESLAREASTGVLKDLMHGLITLMLDSRIEDLEEGQQVIRSVNLLVVKVLEKSDQTNILSALLVLLQDSLLATASSPKFSELVMKCLWRMVRLLPDTINSINLDRILLDIHIFMKVFPKEKLKQCKSEFPIRTLKTLLHTLCKLKGPKILDHLTMIDNKNESELEAHLCRMMKHSMDQTGSKSDKETEKGASRIDEKSSKAKVNDFLAEIFKKIGSKENTKEGLAELYEYKKKYSDADIEPFLKNSSQFFQSYVERGLRVIEMEREGKGRISTSTGISPQMEVTCVPTPTSTVSSIGNTNGEEVGPSVYLERLKILRQRCGLDNTKQDDRPPLTSLLSKPAVPTVASSTDMLHSKLSQLRESREQHQHSDLDSNQTHSSGTVTSSSSTANIDDLKKRLERIKSSRK.

TOG stretches follow at residues 1-223 (MGDD…KLPT) and 268-502 (YELL…LIHG). Lysine 48 is modified (N6-acetyllysine). HEAT repeat units follow at residues 159-197 (IILL…WIRD), 356-394 (GQYA…TTTL), and 434-472 (KSLL…VVGE). Residues 516–579 (PLPGRTAASG…GTKNKKGLET (64 aa)) are disordered. Residues 543 to 554 (LKKAPAAKAGGP) show a composition bias toward low complexity. A TOG 3 region spans residues 588–817 (SIEVCEEKAS…EFEKMQGQSP (230 aa)). The stretch at 750–788 (GLNVKAFISNVKTALAATNPAVRTAAITLLGVMYLYVGP) is one HEAT 4 repeat. A disordered region spans residues 811 to 851 (KMQGQSPPAPTRGISKHSTSGTDEGEDGDEPDDGSNDVVDL). A phosphoserine mark is found at serine 816 and serine 845. Over residues 833–845 (DEGEDGDEPDDGS) the composition is skewed to acidic residues. TOG stretches follow at residues 853–1081 (PRTE…VNMP) and 1193–1428 (IEQL…KRPS). HEAT repeat units follow at residues 855–893 (TEIS…DAKF), 936–974 (KQHV…QTGM), and 1013–1051 (PTDL…HLGY). The segment at 1077 to 1160 (KVNMPAKPAP…KEDEDKSGPI (84 aa)) is disordered. HEAT repeat units follow at residues 1284–1322 (ENEA…VYPA), 1324–1357 (KMFP…SYGM), and 1361–1399 (QPTP…VHGD). The segment at 1422-1443 (RSAKRPSAAPIKQVEEKPQRAQ) is disordered. The residue at position 1469 (serine 1469) is a Phosphoserine. The segment at 1801–1822 (SMDQTGSKSDKETEKGASRIDE) is disordered. The span at 1808 to 1822 (KSDKETEKGASRIDE) shows a compositional bias: basic and acidic residues. Serine 1861 carries the phosphoserine modification. Positions 1932-1957 (PSVYLERLKILRQRCGLDNTKQDDRP) are interaction with TACC3. The interval 1949–2032 (DNTKQDDRPP…RLERIKSSRK (84 aa)) is disordered. Polar residues predominate over residues 1971-1983 (VASSTDMLHSKLS). Over residues 1984-1997 (QLRESREQHQHSDL) the composition is skewed to basic and acidic residues. Over residues 2002–2014 (THSSGTVTSSSST) the composition is skewed to low complexity. Positions 2018 to 2032 (DDLKKRLERIKSSRK) are enriched in basic and acidic residues.

This sequence belongs to the TOG/XMAP215 family. As to quaternary structure, interacts with TACC1. Interacts with SLAIN2 and SLAIN1. Interacts with HNRNPA2B1. Interacts with TACC3 independently of clathrin. Interacts with TACC3 and clathrin forming the TACC3/ch-TOG/clathrin complex located at spindle inter-microtubules bridges. Interacts with NDC80; indicative for an association with the NDC80 complex. As to expression, overexpressed in hepatomas and colonic tumors. Also expressed in skeletal muscle, brain, heart, placenta, lung, liver, kidney and pancreas. Expression is elevated in the brain; highly expressed in the Purkinje cell bodies of the cerebellum.

The protein localises to the cytoplasm. The protein resides in the cytoskeleton. It is found in the microtubule organizing center. It localises to the centrosome. Its subcellular location is the spindle pole. The protein localises to the spindle. The protein resides in the chromosome. It is found in the centromere. It localises to the kinetochore. In terms of biological role, binds to the plus end of microtubules and regulates microtubule dynamics and microtubule organization. Acts as a processive microtubule polymerase. Promotes cytoplasmic microtubule nucleation and elongation. Plays a major role in organizing spindle poles. In spindle formation protects kinetochore microtubules from depolymerization by KIF2C and has an essential role in centrosomal microtubule assembly independently of KIF2C activity. Contributes to centrosome integrity. Acts as a component of the TACC3/ch-TOG/clathrin complex proposed to contribute to stabilization of kinetochore fibers of the mitotic spindle by acting as inter-microtubule bridge. The TACC3/ch-TOG/clathrin complex is required for the maintenance of kinetochore fiber tension. Enhances the strength of NDC80 complex-mediated kinetochore-tip microtubule attachments. In Homo sapiens (Human), this protein is Cytoskeleton-associated protein 5 (CKAP5).